A 403-amino-acid polypeptide reads, in one-letter code: Acetate kinase (403 aa).

Asn13 contacts Mg(2+). Lys20 contacts ATP. Substrate is bound at residue Arg94. Asp153 (proton donor/acceptor) is an active-site residue. Residues 213 to 217 (HLGNG), 288 to 290 (DFR), and 336 to 340 (GIGEN) contribute to the ATP site. Glu390 lines the Mg(2+) pocket.

The protein belongs to the acetokinase family. Homodimer. Mg(2+) serves as cofactor. It depends on Mn(2+) as a cofactor.

Its subcellular location is the cytoplasm. The enzyme catalyses acetate + ATP = acetyl phosphate + ADP. It participates in metabolic intermediate biosynthesis; acetyl-CoA biosynthesis; acetyl-CoA from acetate: step 1/2. In terms of biological role, catalyzes the formation of acetyl phosphate from acetate and ATP. Can also catalyze the reverse reaction. The polypeptide is Acetate kinase (Buchnera aphidicola subsp. Schizaphis graminum (strain Sg)).